The sequence spans 321 residues: WD repeat-containing protein VIP3 (321 aa).

WD repeat units follow at residues 12–55, 58–97, 100–140, 156–195, 198–238, 241–280, and 283–319; these read AHED…LVRT, GHSL…TIAV, APPS…LIST, SSKK…LLHQ, GHNM…LLGS, GHTS…AIQT, and NHND…SLYD.

Component of the nuclear PAF1 complex (PAF1C), which consists of VIP2/ELF7/PAF1, VIP3/SKI8/WDR61, VIP4/LEO1, VIP5/RTF1, VIP6/ELF8/CTR9 and CDC73. Component of the cytoplasmic SKI complex, which consists of SKI2, SKI3 and VIP3/SKI8. Interacts with VIP4 and VIP6.

The protein resides in the nucleus. It is found in the cytoplasm. Functionally, component of the PAF1 complex (PAF1C) which is involved in histone modifications such as methylation on histone H3 'Lys-4' (H3K4me3). Involved in regulation of flowering time. Required for the expression of the flowering repressor and MADS box gene FLC. Required for histone H3 trimethylation on 'Lys-4' (H3K4me3) and histone dimethylation on 'Lys-36' (H3K36me2) at the FLC locus. Prevents trimethylation on 'Lys-27' (H3K27me3) at the same locus. Not required for meiotic recombination or progression. Component of the SKI complex which is thought to be involved in exosome-mediated RNA decay and associates with transcriptionally active genes in a manner dependent on PAF1 complex (PAF1C). Required for proper progression of cell differentiation process. This chain is WD repeat-containing protein VIP3, found in Arabidopsis thaliana (Mouse-ear cress).